The primary structure comprises 154 residues: 6,7-dimethyl-8-ribityllumazine synthase (154 aa).

5-amino-6-(D-ribitylamino)uracil contacts are provided by residues phenylalanine 22, 56–58 (SFE), and 81–83 (VLI). Position 86–87 (86–87 (ET)) interacts with (2S)-2-hydroxy-3-oxobutyl phosphate. Histidine 89 acts as the Proton donor in catalysis. A 5-amino-6-(D-ribitylamino)uracil-binding site is contributed by phenylalanine 114. Position 128 (arginine 128) interacts with (2S)-2-hydroxy-3-oxobutyl phosphate.

It belongs to the DMRL synthase family.

It catalyses the reaction (2S)-2-hydroxy-3-oxobutyl phosphate + 5-amino-6-(D-ribitylamino)uracil = 6,7-dimethyl-8-(1-D-ribityl)lumazine + phosphate + 2 H2O + H(+). It participates in cofactor biosynthesis; riboflavin biosynthesis; riboflavin from 2-hydroxy-3-oxobutyl phosphate and 5-amino-6-(D-ribitylamino)uracil: step 1/2. Catalyzes the formation of 6,7-dimethyl-8-ribityllumazine by condensation of 5-amino-6-(D-ribitylamino)uracil with 3,4-dihydroxy-2-butanone 4-phosphate. This is the penultimate step in the biosynthesis of riboflavin. This is 6,7-dimethyl-8-ribityllumazine synthase from Chlamydia felis (strain Fe/C-56) (Chlamydophila felis).